A 163-amino-acid polypeptide reads, in one-letter code: NADH-quinone oxidoreductase subunit J (163 aa).

Helical transmembrane passes span 1–21, 30–50, 54–74, 94–114, and 138–158; these read MEFV…LVII, LYLI…GAFF, LEVV…IMML, IGPS…IFFV, and LLLV…VFHI.

The protein belongs to the complex I subunit 6 family. In terms of assembly, composed of 13 different subunits. Subunits NuoA, H, J, K, L, M, N constitute the membrane sector of the complex.

The protein resides in the cell membrane. It catalyses the reaction a quinone + NADH + 5 H(+)(in) = a quinol + NAD(+) + 4 H(+)(out). NDH-1 shuttles electrons from NADH, via FMN and iron-sulfur (Fe-S) centers, to quinones in the respiratory chain. Couples the redox reaction to proton translocation (for every two electrons transferred, four hydrogen ions are translocated across the cytoplasmic membrane), and thus conserves the redox energy in a proton gradient. In Buchnera aphidicola subsp. Schizaphis graminum (strain Sg), this protein is NADH-quinone oxidoreductase subunit J (nuoJ).